A 560-amino-acid polypeptide reads, in one-letter code: 2-succinyl-5-enolpyruvyl-6-hydroxy-3-cyclohexene-1-carboxylate synthase (560 aa).

This sequence belongs to the TPP enzyme family. MenD subfamily. As to quaternary structure, homodimer. Requires Mg(2+) as cofactor. The cofactor is Mn(2+). Thiamine diphosphate serves as cofactor.

It carries out the reaction isochorismate + 2-oxoglutarate + H(+) = 5-enolpyruvoyl-6-hydroxy-2-succinyl-cyclohex-3-ene-1-carboxylate + CO2. The protein operates within quinol/quinone metabolism; 1,4-dihydroxy-2-naphthoate biosynthesis; 1,4-dihydroxy-2-naphthoate from chorismate: step 2/7. It functions in the pathway quinol/quinone metabolism; menaquinone biosynthesis. Catalyzes the thiamine diphosphate-dependent decarboxylation of 2-oxoglutarate and the subsequent addition of the resulting succinic semialdehyde-thiamine pyrophosphate anion to isochorismate to yield 2-succinyl-5-enolpyruvyl-6-hydroxy-3-cyclohexene-1-carboxylate (SEPHCHC). This is 2-succinyl-5-enolpyruvyl-6-hydroxy-3-cyclohexene-1-carboxylate synthase from Staphylococcus saprophyticus subsp. saprophyticus (strain ATCC 15305 / DSM 20229 / NCIMB 8711 / NCTC 7292 / S-41).